The sequence spans 555 residues: Glutamine--tRNA ligase (555 aa).

Positions 35 to 45 (PEPNGYLHIGH) match the 'HIGH' region motif. Residues 36 to 38 (EPN) and 42 to 48 (HIGHAKS) each bind ATP. D68 and Y213 together coordinate L-glutamine. Residues T232 and 262-263 (RL) contribute to the ATP site. A 'KMSKS' region motif is present at residues 269–273 (ITSKR).

It belongs to the class-I aminoacyl-tRNA synthetase family. In terms of assembly, monomer.

It localises to the cytoplasm. The catalysed reaction is tRNA(Gln) + L-glutamine + ATP = L-glutaminyl-tRNA(Gln) + AMP + diphosphate. The chain is Glutamine--tRNA ligase from Ectopseudomonas mendocina (strain ymp) (Pseudomonas mendocina).